An 892-amino-acid polypeptide reads, in one-letter code: Polyribonucleotide nucleotidyltransferase (892 aa).

The disordered stretch occupies residues 407–427; that stretch reads YMHNYEMPPYSTGETGRVGSP. Residues D521 and D527 each coordinate Mg(2+). In terms of domain architecture, KH spans 587-646; it reads PRIITTTVPVDKIGEVIGPKGKMINQIQEDTGAEIAIEDDGTVYISSEGGEAAEKAKEII. The S1 motif domain maps to 658-730; that stretch reads GETYNGKVVK…DRGKISLAIP (73 aa). Positions 727 to 892 are disordered; it reads LAIPGFEDQE…VRRDFDPFED (166 aa). Composition is skewed to basic and acidic residues over residues 739-844 and 851-877; these read APRR…DRRS and RRDD…ERSE.

The protein belongs to the polyribonucleotide nucleotidyltransferase family. The cofactor is Mg(2+).

It localises to the cytoplasm. The catalysed reaction is RNA(n+1) + phosphate = RNA(n) + a ribonucleoside 5'-diphosphate. In terms of biological role, involved in mRNA degradation. Catalyzes the phosphorolysis of single-stranded polyribonucleotides processively in the 3'- to 5'-direction. This is Polyribonucleotide nucleotidyltransferase from Bifidobacterium adolescentis (strain ATCC 15703 / DSM 20083 / NCTC 11814 / E194a).